A 143-amino-acid polypeptide reads, in one-letter code: Ribosomal RNA large subunit methyltransferase H (143 aa).

Residues Leu-68 and Gly-95 each contribute to the S-adenosyl-L-methionine site.

This sequence belongs to the RNA methyltransferase RlmH family. In terms of assembly, homodimer.

It localises to the cytoplasm. It carries out the reaction pseudouridine(1915) in 23S rRNA + S-adenosyl-L-methionine = N(3)-methylpseudouridine(1915) in 23S rRNA + S-adenosyl-L-homocysteine + H(+). Its function is as follows. Specifically methylates the pseudouridine at position 1915 (m3Psi1915) in 23S rRNA. This is Ribosomal RNA large subunit methyltransferase H from Mycoplasma mobile (strain ATCC 43663 / 163K / NCTC 11711) (Mesomycoplasma mobile).